The following is an 829-amino-acid chain: Leucine--tRNA ligase (829 aa).

A 'HIGH' region motif is present at residues 34-44 (PYPSGNIHMGH). Positions 591–595 (KMSKS) match the 'KMSKS' region motif. An ATP-binding site is contributed by Lys-594.

This sequence belongs to the class-I aminoacyl-tRNA synthetase family.

The protein resides in the cytoplasm. The enzyme catalyses tRNA(Leu) + L-leucine + ATP = L-leucyl-tRNA(Leu) + AMP + diphosphate. This is Leucine--tRNA ligase from Ehrlichia chaffeensis (strain ATCC CRL-10679 / Arkansas).